A 392-amino-acid chain; its full sequence is Galactokinase (392 aa).

Substrate is bound at residue 37–40 (EHTD). Residues Ser-71 and 128–134 (GAGLSSS) contribute to the ATP site. The Mg(2+) site is built by Ser-134 and Glu-166. Asp-178 functions as the Proton acceptor in the catalytic mechanism. Substrate is bound at residue Tyr-228.

It belongs to the GHMP kinase family. GalK subfamily.

It localises to the cytoplasm. The catalysed reaction is alpha-D-galactose + ATP = alpha-D-galactose 1-phosphate + ADP + H(+). The protein operates within carbohydrate metabolism; galactose metabolism. Functionally, catalyzes the transfer of the gamma-phosphate of ATP to D-galactose to form alpha-D-galactose-1-phosphate (Gal-1-P). In Streptococcus pneumoniae serotype 4 (strain ATCC BAA-334 / TIGR4), this protein is Galactokinase.